The following is a 953-amino-acid chain: Zinc finger CCCH domain-containing protein 18 (953 aa).

Methionine 1 is subject to N-acetylmethionine. The segment covering methionine 1–proline 14 has biased composition (basic and acidic residues). Disordered regions lie at residues methionine 1–proline 222 and glutamine 391–arginine 928. Serine 6 carries the phosphoserine modification. Acidic residues predominate over residues glutamate 15 to aspartate 26. Phosphoserine occurs at positions 34, 46, 53, 59, 67, 74, 78, 83, and 95. The segment covering glutamine 60–arginine 72 has biased composition (acidic residues). The segment covering cysteine 97–glutamate 106 has biased composition (acidic residues). Positions glutamate 105 to valine 134 form a coiled coil. The segment covering aspartate 107–aspartate 124 has biased composition (basic and acidic residues). Residue threonine 109 is modified to Phosphothreonine. Phosphoserine occurs at positions 110 and 118. Composition is skewed to acidic residues over residues glutamate 125 to glutamate 136 and glutamine 143 to lysine 158. Residues glycine 159–lysine 168 are compositionally biased toward basic and acidic residues. Threonine 162 is subject to Phosphothreonine. Residues serine 173 and serine 179 each carry the phosphoserine modification. Over residues glycine 175–aspartate 190 the composition is skewed to basic and acidic residues. The segment covering aspartate 191–glutamate 207 has biased composition (acidic residues). Positions glycine 208–lysine 217 are enriched in basic and acidic residues. A C3H1-type zinc finger spans residues arginine 219–valine 245. Residues glutamate 396–lysine 482 are compositionally biased toward basic and acidic residues. Residues histidine 399 to aspartate 464 are a coiled coil. Serine 487 carries the post-translational modification Phosphoserine. Lysine 510 is covalently cross-linked (Glycyl lysine isopeptide (Lys-Gly) (interchain with G-Cter in SUMO2)). Residues lysine 510 to arginine 520 are compositionally biased toward basic and acidic residues. Residues serine 532, serine 534, and serine 536 each carry the phosphoserine modification. Over residues serine 545 to proline 606 the composition is skewed to low complexity. Residues lysine 622 and lysine 661 each participate in a glycyl lysine isopeptide (Lys-Gly) (interchain with G-Cter in SUMO2) cross-link. Residues lysine 661 to arginine 670 are compositionally biased toward basic and acidic residues. 2 stretches are compositionally biased toward low complexity: residues glycine 692–serine 725 and alanine 736–alanine 750. Residues lysine 760–serine 774 show a composition bias toward basic and acidic residues. Lysine 766 participates in a covalent cross-link: Glycyl lysine isopeptide (Lys-Gly) (interchain with G-Cter in SUMO2). A compositionally biased stretch (low complexity) spans proline 778–glutamine 798. An N6-acetyllysine modification is found at lysine 814. Lysine 817 is covalently cross-linked (Glycyl lysine isopeptide (Lys-Gly) (interchain with G-Cter in SUMO2)). Basic and acidic residues predominate over residues alanine 824 to glutamine 841. Phosphoserine is present on residues serine 842, serine 852, serine 868, serine 893, and serine 896. Positions serine 893–proline 906 are enriched in low complexity. Lysine 908 is covalently cross-linked (Glycyl lysine isopeptide (Lys-Gly) (interchain with G-Cter in SUMO2)). Residues serine 916–leucine 925 show a composition bias toward polar residues. The stretch at lysine 921–proline 950 forms a coiled coil.

In terms of assembly, interacts with ZFC3H1 in a RNase-insensitive manner.

It is found in the nucleus. The polypeptide is Zinc finger CCCH domain-containing protein 18 (Homo sapiens (Human)).